A 175-amino-acid chain; its full sequence is Ribulose bisphosphate carboxylase small subunit, chloroplastic (175 aa).

The N-terminal 46 residues, 1–46 (MAPTVMASSATSVAPFQGLKSTAGLPVSRRSNGASLGSVSNGGRIR), are a transit peptide targeting the chloroplast.

The protein belongs to the RuBisCO small chain family. In terms of assembly, heterohexadecamer of 8 large and 8 small subunits.

It localises to the plastid. Its subcellular location is the chloroplast. In terms of biological role, ruBisCO catalyzes two reactions: the carboxylation of D-ribulose 1,5-bisphosphate, the primary event in carbon dioxide fixation, as well as the oxidative fragmentation of the pentose substrate. Both reactions occur simultaneously and in competition at the same active site. Although the small subunit is not catalytic it is essential for maximal activity. This chain is Ribulose bisphosphate carboxylase small subunit, chloroplastic, found in Aegilops tauschii (Tausch's goatgrass).